We begin with the raw amino-acid sequence, 210 residues long: Na(+)-translocating NADH-quinone reductase subunit D (210 aa).

5 helical membrane-spanning segments follow: residues 42–62 (FVMT…VSLI), 72–92 (IIVQ…VLKA), 103–123 (VFVG…AFAM), 131–151 (LIDG…VGFF), and 178–198 (NGLM…IWVI).

The protein belongs to the NqrDE/RnfAE family. As to quaternary structure, composed of six subunits; NqrA, NqrB, NqrC, NqrD, NqrE and NqrF.

The protein resides in the cell inner membrane. It carries out the reaction a ubiquinone + n Na(+)(in) + NADH + H(+) = a ubiquinol + n Na(+)(out) + NAD(+). With respect to regulation, this reaction is tightly coupled to the Na(+) pumping activity and specifically requires Na(+) for activity. Inhibited by korormicin and 2-N-heptyl-4-hydroxyquinoline N-oxide (HQNO). In terms of biological role, NQR complex catalyzes the reduction of ubiquinone-1 to ubiquinol by two successive reactions, coupled with the transport of Na(+) ions from the cytoplasm to the periplasm. NqrA to NqrE are probably involved in the second step, the conversion of ubisemiquinone to ubiquinol. The chain is Na(+)-translocating NADH-quinone reductase subunit D from Vibrio alginolyticus.